Reading from the N-terminus, the 83-residue chain is MSNKGQLLQDPFLNALRREHVPVSIYLVNGIKLQGQIESFDQYVVLLRNTVTQMVYKHAISTIVPGRAVNFSTAEPAADGDNQ.

Positions 10–69 (DPFLNALRREHVPVSIYLVNGIKLQGQIESFDQYVVLLRNTVTQMVYKHAISTIVPGRAV) constitute a Sm domain.

It belongs to the Hfq family. Homohexamer.

RNA chaperone that binds small regulatory RNA (sRNAs) and mRNAs to facilitate mRNA translational regulation in response to envelope stress, environmental stress and changes in metabolite concentrations. Also binds with high specificity to tRNAs. The chain is RNA-binding protein Hfq from Acidovorax ebreus (strain TPSY) (Diaphorobacter sp. (strain TPSY)).